A 606-amino-acid chain; its full sequence is Preterminal protein (606 aa).

The Nuclear localization signal motif lies at Arg-320–Arg-329. Ser-515 bears the O-(5'-phospho-DNA)-serine mark. The segment at His-573–Phe-606 is disordered. Positions Pro-584–Ala-600 are enriched in pro residues.

Belongs to the adenoviridae terminal protein family. Heterodimer with the polymerase; this heterodimer binds to bp 9 to 18 of the genome. Interacts with host POU2F1; POU2F1 binds to the auxiliary sequences in the inverted terminal repeats and tethers the pTP-POL heterodimer to the origin DNA thereby participating in the assembly of the pre-initiation complex (POL-TP-DBP-NFIA-POU2F1). Post-translationally, preterminal protein is used to replicate viral genome, upon genomic encapsidation it is processed first into iTP and finally into TP by adenovirus protease.

It localises to the host nucleus matrix. Functionally, protein covalently bound to the viral DNA that acts as a primer for viral genomic replication by DNA strand displacement. Assembles on the viral origin of replication in an initiation complex with viral polymerase, DBP, host NFIA and host POU2F1/OCT1. During initiation, the polymerase covalently couples the first dCTP with Ser-580 of pTP. The terminal protein stimulates the template activity over 20 fold compared to protein-free templates. Neo-synthesized viral genomes are linked to two preterminal proteins, one for each 5' end. These new genomes are encapsidated in the nucleus, and during capsid maturation by viral protease, preterminal protein is first cleaved into intermediary (iTP), then into mature TP. May play a role in host nuclear matrix localization of genomic DNA. The chain is Preterminal protein from Human adenovirus A serotype 12 (HAdV-12).